The sequence spans 387 residues: Exodeoxyribonuclease 7 large subunit (387 aa).

This sequence belongs to the XseA family. In terms of assembly, heterooligomer composed of large and small subunits.

The protein localises to the cytoplasm. The catalysed reaction is Exonucleolytic cleavage in either 5'- to 3'- or 3'- to 5'-direction to yield nucleoside 5'-phosphates.. Bidirectionally degrades single-stranded DNA into large acid-insoluble oligonucleotides, which are then degraded further into small acid-soluble oligonucleotides. This Campylobacter jejuni subsp. jejuni serotype O:2 (strain ATCC 700819 / NCTC 11168) protein is Exodeoxyribonuclease 7 large subunit.